A 332-amino-acid polypeptide reads, in one-letter code: Glucokinase (332 aa).

15–20 (ADIGGT) is a binding site for ATP.

The protein belongs to the bacterial glucokinase family.

Its subcellular location is the cytoplasm. The enzyme catalyses D-glucose + ATP = D-glucose 6-phosphate + ADP + H(+). This is Glucokinase from Campylobacter jejuni subsp. doylei (strain ATCC BAA-1458 / RM4099 / 269.97).